Reading from the N-terminus, the 272-residue chain is Putative phosphoenolpyruvate synthase regulatory protein (272 aa).

ADP is bound at residue 152–159 (GVSRCGKT).

Belongs to the pyruvate, phosphate/water dikinase regulatory protein family. PSRP subfamily.

The enzyme catalyses [pyruvate, water dikinase] + ADP = [pyruvate, water dikinase]-phosphate + AMP + H(+). The catalysed reaction is [pyruvate, water dikinase]-phosphate + phosphate + H(+) = [pyruvate, water dikinase] + diphosphate. In terms of biological role, bifunctional serine/threonine kinase and phosphorylase involved in the regulation of the phosphoenolpyruvate synthase (PEPS) by catalyzing its phosphorylation/dephosphorylation. The protein is Putative phosphoenolpyruvate synthase regulatory protein of Pseudomonas fluorescens (strain SBW25).